We begin with the raw amino-acid sequence, 635 residues long: Threonine--tRNA ligase (635 aa).

One can recognise a TGS domain in the interval 1–61; that stretch reads MINISFPDGS…DNDCKLRILT (61 aa). The tract at residues 242 to 533 is catalytic; it reads DHRKLGRELD…LIEEYAGRFP (292 aa). Residues C333, H384, and H510 each coordinate Zn(2+).

It belongs to the class-II aminoacyl-tRNA synthetase family. Homodimer. Zn(2+) is required as a cofactor.

It is found in the cytoplasm. It carries out the reaction tRNA(Thr) + L-threonine + ATP = L-threonyl-tRNA(Thr) + AMP + diphosphate + H(+). Functionally, catalyzes the attachment of threonine to tRNA(Thr) in a two-step reaction: L-threonine is first activated by ATP to form Thr-AMP and then transferred to the acceptor end of tRNA(Thr). Also edits incorrectly charged L-seryl-tRNA(Thr). This Rickettsia conorii (strain ATCC VR-613 / Malish 7) protein is Threonine--tRNA ligase.